A 383-amino-acid polypeptide reads, in one-letter code: Acetylornithine deacetylase (383 aa).

His80 provides a ligand contact to Zn(2+). Asp82 is an active-site residue. Asp112 is a binding site for Zn(2+). Glu144 is an active-site residue. 3 residues coordinate Zn(2+): Glu145, Glu169, and His355.

Belongs to the peptidase M20A family. ArgE subfamily. As to quaternary structure, homodimer. Zn(2+) serves as cofactor. The cofactor is Co(2+). Glutathione is required as a cofactor.

The protein localises to the cytoplasm. The catalysed reaction is N(2)-acetyl-L-ornithine + H2O = L-ornithine + acetate. It functions in the pathway amino-acid biosynthesis; L-arginine biosynthesis; L-ornithine from N(2)-acetyl-L-ornithine (linear): step 1/1. Its function is as follows. Catalyzes the hydrolysis of the amide bond of N(2)-acetylated L-amino acids. Cleaves the acetyl group from N-acetyl-L-ornithine to form L-ornithine, an intermediate in L-arginine biosynthesis pathway, and a branchpoint in the synthesis of polyamines. In Erwinia tasmaniensis (strain DSM 17950 / CFBP 7177 / CIP 109463 / NCPPB 4357 / Et1/99), this protein is Acetylornithine deacetylase.